Consider the following 393-residue polypeptide: Chalcone synthase (393 aa).

Residue Cys-164 is part of the active site.

The protein belongs to the thiolase-like superfamily. Chalcone/stilbene synthases family.

It carries out the reaction (E)-4-coumaroyl-CoA + 3 malonyl-CoA + 3 H(+) = 2',4,4',6'-tetrahydroxychalcone + 3 CO2 + 4 CoA. The protein operates within secondary metabolite biosynthesis; flavonoid biosynthesis. In terms of biological role, the primary product of this enzyme is 4,2',4',6'-tetrahydroxychalcone (also termed naringenin-chalcone or chalcone) which can under specific conditions spontaneously isomerize into naringenin. This Vitis vinifera (Grape) protein is Chalcone synthase (CHS).